We begin with the raw amino-acid sequence, 463 residues long: MNRITRKSCLFAIIFASLFVTHALGAAIDPPRRPHNVKPFHNGNLELQRRANEPFFEIDVKSLNTNSPISELCKKDLHVIESSHDLFHLQNQCEFILGSLKVTNYDSNILDLNSLRAIGGDLIIQDSPELIRIQAGNLNKIEGLFQLQGLTSLVSVEIPTLKFCQSLEWKVVPILNYVSMDSQNIEIIKDIVISDTSLANIENFNKVQEIDTFNINNNRFLETIHSNVKTIRGQFSVHANAKELELEMPHLREVENITIRDTSLVYLPQLTKVKSSLEFIENYFYELNLNNLQKIGGTLGIINNVNLIKVNLENLTDIQGGLMIADNESLEDITFLPNLKQIGGAIFFEGSFKDIMFDSLKLVKGSAFIKSSSNVLDCNKWTNPSNGRSIIRGGKFTCISGKKENTLNVKQDGTIIEKGYKDLTQEGEDSKKRVISKYANSANPSMQLDPLLFGTCLVAMLLF.

Residues 1–25 form the signal peptide; it reads MNRITRKSCLFAIIFASLFVTHALG. LRR repeat units follow at residues 127 to 147, 185 to 206, 207 to 233, 251 to 275, and 302 to 325; these read SPEL…LFQL, IEII…NFNK, VQEI…TIRG, LREV…KVKS, and INNV…LMIA. Residues asparagine 256, asparagine 314, and asparagine 327 are each glycosylated (N-linked (GlcNAc...) asparagine). Asparagine 440 is lipidated: GPI-anchor amidated asparagine. The propeptide at 441–463 is removed in mature form; that stretch reads SANPSMQLDPLLFGTCLVAMLLF.

It belongs to the SPS2 family.

Its subcellular location is the cell membrane. Redundant with SPS2 for the organization of the beta-glucan layer of the spore wall. This chain is Sporulation-specific protein 22 (SPS22), found in Saccharomyces cerevisiae (strain ATCC 204508 / S288c) (Baker's yeast).